The primary structure comprises 205 residues: Small ribosomal subunit protein uS4 (205 aa).

Positions 1 to 16 (MSKRESSKYKIDRRMG) are enriched in basic and acidic residues. Positions 1-46 (MSKRESSKYKIDRRMGENIWGRPKSPVNRREYGPGQHGQRRKGKLS) are disordered. Residues 94-157 (SRLDAIVYRA…KQLVTVLEAV (64 aa)) enclose the S4 RNA-binding domain.

The protein belongs to the universal ribosomal protein uS4 family. As to quaternary structure, part of the 30S ribosomal subunit. Contacts protein S5. The interaction surface between S4 and S5 is involved in control of translational fidelity.

One of the primary rRNA binding proteins, it binds directly to 16S rRNA where it nucleates assembly of the body of the 30S subunit. In terms of biological role, with S5 and S12 plays an important role in translational accuracy. The chain is Small ribosomal subunit protein uS4 from Rhizobium etli (strain ATCC 51251 / DSM 11541 / JCM 21823 / NBRC 15573 / CFN 42).